We begin with the raw amino-acid sequence, 890 residues long: Genome polyprotein 2 (890 aa).

Residues 135–255 (AFNFAHGYCY…NSDLLNGIVG (121 aa)) form the Peptidase C6 domain. Residues cysteine 143 and histidine 215 each act as for helper component proteinase activity in the active site. The segment at 506 to 533 (FTTSGDDDSPPPPGDSPSRPPGRSPDRV) is disordered. Over residues 515 to 528 (PPPPGDSPSRPPGR) the composition is skewed to pro residues. The stretch at 788–816 (ELVQRSMTKLDKEIELFQAQIDSQRRAVT) forms a coiled coil.

The protein belongs to the bymoviruses polyprotein 2 family. In terms of processing, the viral RNA2 of bymoviruses is expressed as a single polyprotein which undergoes post-translational proteolytic processing resulting in the production of at least two individual proteins. The HC-pro cleaves its C-terminus autocatalytically (Potential).

It carries out the reaction Hydrolyzes a Gly-|-Gly bond at its own C-terminus, commonly in the sequence -Tyr-Xaa-Val-Gly-|-Gly, in the processing of the potyviral polyprotein.. The sequence is that of Genome polyprotein 2 from Hordeum vulgare (Barley).